The following is a 722-amino-acid chain: Ataxin-7-like protein 2 (722 aa).

Disordered regions lie at residues 106–228 (LSKL…PPKT), 288–317 (NSRK…LPSS), 347–403 (SRAS…DCHY), and 531–600 (AITS…GCRG). Pro residues predominate over residues 181–191 (GKPPMAPPSKE). The SCA7 domain maps to 230–297 (RKMARKECDL…NSRKGESPKE (68 aa)). Basic and acidic residues predominate over residues 290–311 (RKGESPKEKSPGRKEQVLERPS). The span at 541-556 (PSPSFSKLPPSKASKS) shows a compositional bias: low complexity. Positions 558–569 (KGKDGVEVEAPS) are enriched in basic and acidic residues. A Phosphoserine modification is found at S575.

The polypeptide is Ataxin-7-like protein 2 (ATXN7L2) (Homo sapiens (Human)).